The sequence spans 224 residues: MNFEKLVSQAVNGDRFKIFCGQLTEFTNSLAGEREAIEKGMRQIETQQLEAETSFTERIAEDRVKCAAQRESLERQLQDLTATDNKLSEQKRDWEERQEKAYDELMSYLENEDVDSAGTQFGDHFNSLIKSMNNLSHDSMNGQFNSLKNNLDELNIEKKQLEVAIADQSSTISEMIPSLRPTCGATYKERNTLRIIFHYQVAKLRSEYQKCRLQEEALKARLST.

Coiled-coil stretches lie at residues Arg63 to Arg97 and His137 to Thr171.

Interacts with gras-1. Interacts with brc-1 and brd-1.

Its subcellular location is the chromosome. Functionally, plays a role in early meiotic events; during prophase I contributes to synaptonemal complex (SC) assembly, synapsis and chiasmata formation and stabilization of homologous chromosomes pairing. Required for restricting SC assembly to bridge paired chromosome axes. Required for the timely progression of meiotic crossover recombination. Required for the synapsis checkpoint. The chain is Synaptonemal complex protein 3 from Caenorhabditis elegans.